The primary structure comprises 354 residues: Homeobox-leucine zipper protein HOX27 (354 aa).

A disordered region spans residues 98–175 (SVAAGAPGME…DDEGASARKK (78 aa)). A compositionally biased stretch (gly residues) spans 148-157 (QGGGGGGGGE). The segment at residues 171–230 (SARKKLRLSKEQSAFLEESFKEHSTLNPKQKVALAKQLNLRPRQVEVWFQNRRARTKLKQ) is a DNA-binding region (homeobox). The segment at 229–273 (KQTEVDCEYLKRCCETLTEENRRLHKELAELRALKTARPFYMHLP) is leucine-zipper. Positions 294 to 323 (STSAPAAATSPAAAPTAAARTAVASPEPHR) are disordered.

It belongs to the HD-ZIP homeobox family. Class II subfamily. In terms of tissue distribution, expressed in seedlings, roots, stems, leaf sheaths and blades and panicles.

The protein localises to the nucleus. Probable transcription factor. This is Homeobox-leucine zipper protein HOX27 (HOX27) from Oryza sativa subsp. indica (Rice).